A 234-amino-acid chain; its full sequence is BTB/POZ domain-containing protein KCTD5 (234 aa).

Position 2 is an N-acetylalanine (Ala-2). The BTB domain maps to 44 to 146; sequence KWVRLNVGGT…LVKDKIRERD (103 aa). Residues 213–234 form a disordered region; it reads PYGTTSEPSEKAKILQERGSRM. Over residues 220–234 the composition is skewed to basic and acidic residues; the sequence is PSEKAKILQERGSRM.

In terms of assembly, homopentamer. Interacts (via C-terminus) with GRASP55/GORASP2. Interacts with CUL3 and with ubiquitinated proteins. Interacts with CRY1.

The protein localises to the cytoplasm. Its subcellular location is the cytosol. The protein resides in the nucleus. Its function is as follows. Its interaction with CUL3 suggests that it may act as a substrate adapter in some E3 ligase complex. Does not affect the function of Kv channel Kv2.1/KCNB1, Kv1.2/KCNA2, Kv4.2/KCND2 and Kv3.4/KCNC4. This chain is BTB/POZ domain-containing protein KCTD5 (Kctd5), found in Mus musculus (Mouse).